The chain runs to 578 residues: Protein O-linked-mannose beta-1,4-N-acetylglucosaminyltransferase 2 (578 aa).

Over 1–4 (MNLP) the chain is Cytoplasmic. The chain crosses the membrane as a helical; Signal-anchor for type II membrane protein span at residues 5-25 (AVLNGLLVSVVAALLWKYVRL). Residues 26 to 578 (VEHTSQLEEE…PFADVLICKT (553 aa)) lie on the Lumenal side of the membrane. N-linked (GlcNAc...) asparagine glycans are attached at residues Asn98, Asn275, and Asn541. The 97-residue stretch at 482 to 578 (RVREPKCQTS…PFADVLICKT (97 aa)) folds into the Fibronectin type-III domain.

This sequence belongs to the glycosyltransferase 61 family.

Its subcellular location is the endoplasmic reticulum membrane. It carries out the reaction 3-O-(alpha-D-mannosyl)-L-threonyl-[protein] + UDP-N-acetyl-alpha-D-glucosamine = 3-O-(N-acetyl-beta-D-glucosaminyl-(1-&gt;4)-alpha-D-mannosyl)-L-threonyl-[protein] + UDP + H(+). It participates in protein modification; protein glycosylation. In terms of biological role, O-linked mannose beta-1,4-N-acetylglucosaminyltransferase that transfers UDP-N-acetyl-D-glucosamine to the 4-position of the mannose to generate N-acetyl-D-glucosamine-beta-1,4-O-D-mannosylprotein. Involved in the biosynthesis of the phosphorylated O-mannosyl trisaccharide (N-acetylgalactosamine-beta-3-N-acetylglucosamine-beta-4-(phosphate-6-)mannose), a carbohydrate structure present in alpha-dystroglycan (DAG1), which is required for binding laminin G-like domain-containing extracellular proteins with high affinity. This is Protein O-linked-mannose beta-1,4-N-acetylglucosaminyltransferase 2 (pomgnt2) from Danio rerio (Zebrafish).